We begin with the raw amino-acid sequence, 900 residues long: Protein translocase subunit SecA (900 aa).

Residues glutamine 87, glycine 105 to threonine 109, and aspartate 510 contribute to the ATP site. Positions aspartate 857–lysine 890 are disordered. Low complexity predominate over residues aspartate 860–glycine 872. Residues cysteine 884, cysteine 886, cysteine 895, and histidine 896 each coordinate Zn(2+).

The protein belongs to the SecA family. In terms of assembly, monomer and homodimer. Part of the essential Sec protein translocation apparatus which comprises SecA, SecYEG and auxiliary proteins SecDF-YajC and YidC. Zn(2+) is required as a cofactor.

The protein resides in the cell inner membrane. Its subcellular location is the cytoplasm. It carries out the reaction ATP + H2O + cellular proteinSide 1 = ADP + phosphate + cellular proteinSide 2.. In terms of biological role, part of the Sec protein translocase complex. Interacts with the SecYEG preprotein conducting channel. Has a central role in coupling the hydrolysis of ATP to the transfer of proteins into and across the cell membrane, serving both as a receptor for the preprotein-SecB complex and as an ATP-driven molecular motor driving the stepwise translocation of polypeptide chains across the membrane. In Marinomonas sp. (strain MWYL1), this protein is Protein translocase subunit SecA.